Consider the following 122-residue polypeptide: MIQMQSTLDVACNSGARRVQCIKVLGGSHRRYAGIGDIIKVSVKEAIPRGKAKKGDVYSAVVVRTKKGVRRPDGSVIRFDRNAAVLLNANNAPIGTRIFGPVTRELRTEQFMKIVSLAPEVL.

This sequence belongs to the universal ribosomal protein uL14 family. In terms of assembly, part of the 50S ribosomal subunit. Forms a cluster with proteins L3 and L19. In the 70S ribosome, L14 and L19 interact and together make contacts with the 16S rRNA in bridges B5 and B8.

Functionally, binds to 23S rRNA. Forms part of two intersubunit bridges in the 70S ribosome. The protein is Large ribosomal subunit protein uL14 of Shewanella woodyi (strain ATCC 51908 / MS32).